The sequence spans 328 residues: UDP-N-acetylglucosamine transporter YEA4 (328 aa).

Helical transmembrane passes span Met1–Phe21, Ile30–Pro50, His66–Asn86, Ile98–Cys118, Tyr122–Leu142, Ser166–Leu186, Trp198–Thr218, Leu241–Ile261, Leu274–Ile294, and Val298–Ser318.

Belongs to the nucleotide-sugar transporter family. SLC35A subfamily.

Its subcellular location is the golgi apparatus membrane. In terms of biological role, sugar transporter that specifically mediates the transport of UDP-N-acetylglucosamine (UDP-GlcNAc) from the cytosol into Golgi vesicles where glycosyltransferases function. The chain is UDP-N-acetylglucosamine transporter YEA4 (YEA4) from Kluyveromyces lactis (strain ATCC 8585 / CBS 2359 / DSM 70799 / NBRC 1267 / NRRL Y-1140 / WM37) (Yeast).